A 368-amino-acid polypeptide reads, in one-letter code: Zinc finger protein 24 (368 aa).

A Glycyl lysine isopeptide (Lys-Gly) (interchain with G-Cter in SUMO2) cross-link involves residue lysine 22. Lysine 27 is covalently cross-linked (Glycyl lysine isopeptide (Lys-Gly) (interchain with G-Cter in SUMO1); alternate). Lysine 27 participates in a covalent cross-link: Glycyl lysine isopeptide (Lys-Gly) (interchain with G-Cter in SUMO2); alternate. One can recognise an SCAN box domain in the interval 52–134 (RQRFRQFGYQ…TVLEDLESEL (83 aa)). Residues serine 132 and serine 142 each carry the phosphoserine modification. Glycyl lysine isopeptide (Lys-Gly) (interchain with G-Cter in SUMO2) cross-links involve residues lysine 147, lysine 177, and lysine 236. A C2H2-type 1 zinc finger spans residues 251-273 (HICDECGKHFSQGSALILHQRIH). The interval 251 to 301 (HICDECGKHFSQGSALILHQRIHSGEKPYGCVECGKAFSRSSILVQHQRVH) is necessary and sufficient for nuclear localization. Position 274 is a phosphoserine (serine 274). Residues lysine 277 and lysine 286 each participate in a glycyl lysine isopeptide (Lys-Gly) (interchain with G-Cter in SUMO2) cross-link. C2H2-type zinc fingers lie at residues 279–301 (YGCV…QRVH), 307–329 (YKCL…QRIH), and 335–357 (YECV…QRRH). Serine 292 carries the post-translational modification Phosphoserine. Tyrosine 335 is modified (phosphotyrosine). Glycyl lysine isopeptide (Lys-Gly) (interchain with G-Cter in SUMO2) cross-links involve residues lysine 361 and lysine 367.

This sequence belongs to the krueppel C2H2-type zinc-finger protein family. In terms of processing, sumoylated.

It localises to the nucleus. Transcription factor required for myelination of differentiated oligodendrocytes. Required for the conversion of oligodendrocytes from the premyelinating to the myelinating state. In the developing central nervous system (CNS), involved in the maintenance in the progenitor stage by promoting the cell cycle. Specifically binds to the 5'-TCAT-3' DNA sequence. Has transcription repressor activity in vitro. The protein is Zinc finger protein 24 (Znf24) of Rattus norvegicus (Rat).